Consider the following 277-residue polypeptide: Phosphatidylglycerol--prolipoprotein diacylglyceryl transferase (277 aa).

Helical transmembrane passes span 18–38 (IAIY…YFMA), 54–74 (DLLV…YVIF), 91–111 (EGGI…IVFA), and 115–135 (GLSF…GQAI). A 1,2-diacyl-sn-glycero-3-phospho-(1'-sn-glycerol) is bound at residue Arg137. Helical transmembrane passes span 177–197 (QPTF…LLLL), 205–225 (GELF…IEGM), and 236–256 (LRTA…LWVY).

The protein belongs to the Lgt family.

Its subcellular location is the cell membrane. It catalyses the reaction L-cysteinyl-[prolipoprotein] + a 1,2-diacyl-sn-glycero-3-phospho-(1'-sn-glycerol) = an S-1,2-diacyl-sn-glyceryl-L-cysteinyl-[prolipoprotein] + sn-glycerol 1-phosphate + H(+). The protein operates within protein modification; lipoprotein biosynthesis (diacylglyceryl transfer). In terms of biological role, catalyzes the transfer of the diacylglyceryl group from phosphatidylglycerol to the sulfhydryl group of the N-terminal cysteine of a prolipoprotein, the first step in the formation of mature lipoproteins. This chain is Phosphatidylglycerol--prolipoprotein diacylglyceryl transferase, found in Shouchella clausii (strain KSM-K16) (Alkalihalobacillus clausii).